The following is a 146-amino-acid chain: Transcription antitermination protein NusB (146 aa).

Belongs to the NusB family.

Its function is as follows. Involved in transcription antitermination. Required for transcription of ribosomal RNA (rRNA) genes. Binds specifically to the boxA antiterminator sequence of the ribosomal RNA (rrn) operons. In Koribacter versatilis (strain Ellin345), this protein is Transcription antitermination protein NusB.